Reading from the N-terminus, the 246-residue chain is DNA polymerase sliding clamp (246 aa).

Belongs to the PCNA family. As to quaternary structure, homotrimer. The subunits circularize to form a toroid; DNA passes through its center. Replication factor C (RFC) is required to load the toroid on the DNA.

In terms of biological role, sliding clamp subunit that acts as a moving platform for DNA processing. Responsible for tethering the catalytic subunit of DNA polymerase and other proteins to DNA during high-speed replication. The chain is DNA polymerase sliding clamp from Thermoplasma acidophilum (strain ATCC 25905 / DSM 1728 / JCM 9062 / NBRC 15155 / AMRC-C165).